A 606-amino-acid chain; its full sequence is Retrovirus-related Pol polyprotein from type-1 retrotransposable element R2 (606 aa).

One can recognise a Reverse transcriptase domain in the interval 1–208 (GTLANIIMLE…NTFKYLGLTF (208 aa)). A nucleic acid-binding endonuclease region spans residues 331–606 (IFNIEGPARS…PPDPPRPVPP (276 aa)).

The enzyme catalyses DNA(n) + a 2'-deoxyribonucleoside 5'-triphosphate = DNA(n+1) + diphosphate. In Popillia japonica (Japanese beetle), this protein is Retrovirus-related Pol polyprotein from type-1 retrotransposable element R2.